Here is a 777-residue protein sequence, read N- to C-terminus: Mediator of RNA polymerase II transcription subunit 15 (777 aa).

Disordered regions lie at residues 120–139 (MNLP…HGIT) and 418–520 (SIPV…EEQQ). Residues 420-434 (PVMSSPSPVQQVQTP) are compositionally biased toward low complexity. The segment covering 435-448 (QPMPPPPQPSPQPS) has biased composition (pro residues). The span at 449–471 (QPMSQPNSNVSSGPAPSPSSFMP) shows a compositional bias: low complexity. A compositionally biased stretch (polar residues) spans 500 to 519 (TPGNPNSVMSPASNNQSEEQ).

Belongs to the Mediator complex subunit 15 family. In terms of assembly, component of the Mediator complex. Interacts with srebf1 and srebf2. Interacts with smad2, smad3 and smad4.

It is found in the cytoplasm. It localises to the nucleus. Its function is as follows. Component of the Mediator complex, a coactivator involved in the regulated transcription of nearly all RNA polymerase II-dependent genes. Mediator functions as a bridge to convey information from gene-specific regulatory proteins to the basal RNA polymerase II transcription machinery. Mediator is recruited to promoters by direct interactions with regulatory proteins and serves as a scaffold for the assembly of a functional preinitiation complex with RNA polymerase II and the general transcription factors. Required for cholesterol-dependent gene regulation. Positively regulates the Nodal signaling pathway. In Xenopus laevis (African clawed frog), this protein is Mediator of RNA polymerase II transcription subunit 15 (med15).